The following is a 316-amino-acid chain: 4-hydroxy-3-methylbut-2-enyl diphosphate reductase (316 aa).

Residue C12 coordinates [4Fe-4S] cluster. (2E)-4-hydroxy-3-methylbut-2-enyl diphosphate is bound by residues H41 and H74. Positions 41 and 74 each coordinate dimethylallyl diphosphate. Isopentenyl diphosphate-binding residues include H41 and H74. A [4Fe-4S] cluster-binding site is contributed by C96. H124 contacts (2E)-4-hydroxy-3-methylbut-2-enyl diphosphate. Residue H124 participates in dimethylallyl diphosphate binding. H124 is an isopentenyl diphosphate binding site. Catalysis depends on E126, which acts as the Proton donor. (2E)-4-hydroxy-3-methylbut-2-enyl diphosphate is bound at residue T169. [4Fe-4S] cluster is bound at residue C199. (2E)-4-hydroxy-3-methylbut-2-enyl diphosphate is bound by residues S227, S228, N229, and S271. Positions 227, 228, 229, and 271 each coordinate dimethylallyl diphosphate. Isopentenyl diphosphate is bound by residues S227, S228, N229, and S271.

This sequence belongs to the IspH family. Requires [4Fe-4S] cluster as cofactor.

The catalysed reaction is isopentenyl diphosphate + 2 oxidized [2Fe-2S]-[ferredoxin] + H2O = (2E)-4-hydroxy-3-methylbut-2-enyl diphosphate + 2 reduced [2Fe-2S]-[ferredoxin] + 2 H(+). It carries out the reaction dimethylallyl diphosphate + 2 oxidized [2Fe-2S]-[ferredoxin] + H2O = (2E)-4-hydroxy-3-methylbut-2-enyl diphosphate + 2 reduced [2Fe-2S]-[ferredoxin] + 2 H(+). The protein operates within isoprenoid biosynthesis; dimethylallyl diphosphate biosynthesis; dimethylallyl diphosphate from (2E)-4-hydroxy-3-methylbutenyl diphosphate: step 1/1. It participates in isoprenoid biosynthesis; isopentenyl diphosphate biosynthesis via DXP pathway; isopentenyl diphosphate from 1-deoxy-D-xylulose 5-phosphate: step 6/6. Catalyzes the conversion of 1-hydroxy-2-methyl-2-(E)-butenyl 4-diphosphate (HMBPP) into a mixture of isopentenyl diphosphate (IPP) and dimethylallyl diphosphate (DMAPP). Acts in the terminal step of the DOXP/MEP pathway for isoprenoid precursor biosynthesis. This is 4-hydroxy-3-methylbut-2-enyl diphosphate reductase from Xylella fastidiosa (strain M23).